The primary structure comprises 100 residues: Urease subunit gamma (100 aa).

This sequence belongs to the urease gamma subunit family. As to quaternary structure, heterotrimer of UreA (gamma), UreB (beta) and UreC (alpha) subunits. Three heterotrimers associate to form the active enzyme.

The protein localises to the cytoplasm. It carries out the reaction urea + 2 H2O + H(+) = hydrogencarbonate + 2 NH4(+). Its pathway is nitrogen metabolism; urea degradation; CO(2) and NH(3) from urea (urease route): step 1/1. This Corynebacterium efficiens (strain DSM 44549 / YS-314 / AJ 12310 / JCM 11189 / NBRC 100395) protein is Urease subunit gamma.